We begin with the raw amino-acid sequence, 602 residues long: Arginine--tRNA ligase (602 aa).

The short motif at 138–148 is the 'HIGH' region element; sequence ANPTGPMHVGH.

It belongs to the class-I aminoacyl-tRNA synthetase family. In terms of assembly, monomer.

The protein resides in the cytoplasm. It carries out the reaction tRNA(Arg) + L-arginine + ATP = L-arginyl-tRNA(Arg) + AMP + diphosphate. The chain is Arginine--tRNA ligase from Gluconobacter oxydans (strain 621H) (Gluconobacter suboxydans).